A 374-amino-acid chain; its full sequence is uncharacterized protein (374 aa).

A compositionally biased stretch (basic and acidic residues) spans 1–13 (METKYHEYDDVQT). Disordered regions lie at residues 1 to 20 (METKYHEYDDVQTKDTPSNK), 91 to 193 (SPMT…PLNQ), and 236 to 374 (KINN…SDFE). Positions 95-155 (NNNNNNNNNN…NNSSNNNNNN (61 aa)) are enriched in low complexity. Residues 166–193 (ISSNQSSPLSIYSTPPNPSSYVSSPLNQ) are compositionally biased toward polar residues. A compositionally biased stretch (pro residues) spans 242–262 (APPPPPKACAPPPPPPPPPPI). Positions 277–300 (NNNNNNNNNNNSSNTNDSNNTNNT) are enriched in low complexity.

This is an uncharacterized protein from Dictyostelium discoideum (Social amoeba).